Consider the following 78-residue polypeptide: Small ribosomal subunit protein bS18B (78 aa).

The interval 1 to 22 (MPRKPVRKVASTPRPNPLDQNG) is disordered.

Belongs to the bacterial ribosomal protein bS18 family. In terms of assembly, part of the 30S ribosomal subunit. Forms a tight heterodimer with protein bS6.

Binds as a heterodimer with protein bS6 to the central domain of the 16S rRNA, where it helps stabilize the platform of the 30S subunit. This chain is Small ribosomal subunit protein bS18B, found in Streptomyces avermitilis (strain ATCC 31267 / DSM 46492 / JCM 5070 / NBRC 14893 / NCIMB 12804 / NRRL 8165 / MA-4680).